Consider the following 533-residue polypeptide: Purine-cytosine permease FCY2 (533 aa).

Topologically, residues 1 to 98 are cytoplasmic; it reads MLEEGNNVYE…NAASMWFSAN (98 aa). A Glycyl lysine isopeptide (Lys-Gly) (interchain with G-Cter in ubiquitin) cross-link involves residue lysine 16. Serine 18 carries the phosphoserine modification. A helical membrane pass occupies residues 99 to 119; it reads MVIASYALGALGPMVFGLNFG. The Extracellular segment spans residues 120-121; sequence QS. A helical membrane pass occupies residues 122–141; it reads VLVIIFFNIMGLIFVAFFSV. Over 142 to 198 the chain is Cytoplasmic; that stretch reads FGAELGLRQMILSRYLVGNVTARIFSLINVIACVGWGIVNTSVSAQLLNMVNEGSGH. The surface seeking stretch occupies residues 165-184; it reads IFSLINVIACVGWGIVNTSV. The chain crosses the membrane as a helical span at residues 199–218; the sequence is VCPIWAGCLIIIGGTVLVTF. Topologically, residues 219–256 are extracellular; that stretch reads FGYSVIHAYEKWSWVPNFAVFLVIIAQLSRSGKFKGGE. A helical membrane pass occupies residues 257 to 276; that stretch reads WVGGATTAGSVLSFGSSIFG. Topologically, residues 277–300 are cytoplasmic; that stretch reads FAAGWTTYAADYTVYMPKSTNKYK. The chain crosses the membrane as a helical span at residues 301 to 320; that stretch reads IFFSLVAGLAFPLFFTMILG. Residues 321 to 347 lie on the Extracellular side of the membrane; the sequence is AASAMAALNDPTWKAYYDKNAMGGVIY. A helical transmembrane segment spans residues 348–367; that stretch reads AILVPNSLNGFGQFCCVLLA. At 368 to 398 the chain is on the cytoplasmic side; the sequence is LSTIANNIPNMYTVALSAQALWAPLAKIPRV. The chain crosses the membrane as a helical span at residues 399–418; the sequence is VWTMAGNAATLGISIPATYY. The Extracellular portion of the chain corresponds to 419–465; the sequence is FDGFMENFMDSIGYYLAIYIAISCSEHFFYRRSFSAYNIDDWDNWEH. Residues 466–485 form a helical membrane-spanning segment; the sequence is LPIGIAGTAALIVGAFGVAL. At 486–533 the chain is on the cytoplasmic side; that stretch reads GMCQTYWVGEIGRLIGKYGGDIGFELGASWAFIIYNILRPLELKYFGR.

This sequence belongs to the purine-cytosine permease (2.A.39) family. Post-translationally, not N-glycosylated.

It is found in the membrane. Functionally, this permease has a broad specificity towards purines, and also transport cytosine and 5-methylcytosine but neither uracil nor thymine. The polypeptide is Purine-cytosine permease FCY2 (FCY2) (Saccharomyces cerevisiae (strain ATCC 204508 / S288c) (Baker's yeast)).